The following is a 453-amino-acid chain: Alpha-galacturonidase (453 aa).

NAD(+) is bound at residue 11-72 (IKIAYIGGGS…SQWEYKSVDS (62 aa)). Asparagine 151 provides a ligand contact to substrate. Residue cysteine 173 coordinates Mn(2+). The active-site Proton donor is histidine 174. Mn(2+) is bound at residue histidine 209.

Belongs to the glycosyl hydrolase 4 family. As to quaternary structure, homotetramer. NAD(+) is required as a cofactor. It depends on Mn(2+) as a cofactor.

It carries out the reaction [(1-&gt;4)-alpha-D-galacturonosyl](n) + H2O = alpha-D-galacturonate + [(1-&gt;4)-alpha-D-galacturonosyl](n-1). Functionally, alpha-galacturonidase able to catalyze the hydrolysis of the chromogenic substrate p-nitrophenyl-alpha-D-galacturonic acid (pNPalphaGalUA). It is probable that alpha-1,4-di-galacturonate (GalUA(2)) is the naturally occurring substrate. The chain is Alpha-galacturonidase from Thermoanaerobacter italicus (strain DSM 9252 / Ab9).